The following is a 155-amino-acid chain: UPF0266 membrane protein lin0773 (155 aa).

3 helical membrane-spanning segments follow: residues 8–28 (IFLFIANILTLLYILYNDAVI), 46–66 (RWDGYIFVGIIVLLFVSNTFF), and 70–90 (PFSTSVLLAVMGVLFIYICFF).

It belongs to the UPF0266 family.

It is found in the cell membrane. This is UPF0266 membrane protein lin0773 from Listeria innocua serovar 6a (strain ATCC BAA-680 / CLIP 11262).